Consider the following 308-residue polypeptide: Acetaldehyde dehydrogenase 1 (308 aa).

10-13 (SGNI) is an NAD(+) binding site. The Acyl-thioester intermediate role is filled by cysteine 128. Residues 159–167 (SAGPGTRAN) and asparagine 285 contribute to the NAD(+) site.

It belongs to the acetaldehyde dehydrogenase family.

It catalyses the reaction acetaldehyde + NAD(+) + CoA = acetyl-CoA + NADH + H(+). In Salinispora arenicola (strain CNS-205), this protein is Acetaldehyde dehydrogenase 1.